Reading from the N-terminus, the 445-residue chain is FAS-associated factor 2 (445 aa).

N-acetylalanine is present on Ala2. Residues 12–48 (EQTEKLLQFQDLTGIESMDQCRHTLEQHNWNIEAAVQ) form the UBA domain. At Lys167 the chain carries N6-acetyllysine. Residues 275–350 (SERLEREERN…EEKERKLECL (76 aa)) adopt a coiled-coil conformation. Positions 299–361 (ASLRADQEKE…PEPSPDDPES (63 aa)) are disordered. The segment covering 303–348 (ADQEKERKKREERERKRRKEEEVQQQKLAEERRRQNLQEEKERKLE) has biased composition (basic and acidic residues). The UBX domain maps to 357 to 439 (DDPESVKIIF…GLSHTEVLFV (83 aa)).

In terms of assembly, identified in a complex that contains SEL1L, OS9, FAF2/UBXD8, UBE2J1/UBC6E and AUP1. Interacts with YOD1. Interacts (via N-terminus) with UBQLN2 (via C-terminus). Interacts with PNPLA2 and UBAC2. Interacts with ZFAND2B; probably through VCP. Interacts with LMBR1L. In terms of tissue distribution, broadly expressed, with highest levels in brain.

The protein resides in the cytoplasm. Its subcellular location is the lipid droplet. It localises to the endoplasmic reticulum. In terms of biological role, plays an important role in endoplasmic reticulum-associated degradation (ERAD) that mediates ubiquitin-dependent degradation of misfolded endoplasmic reticulum proteins. By controlling the steady-state expression of the IGF1R receptor, indirectly regulates the insulin-like growth factor receptor signaling pathway. Involved in inhibition of lipid droplet degradation by binding to phospholipase PNPL2 and inhibiting its activity by promoting dissociation of PNPL2 from its endogenous activator, ABHD5 which inhibits the rate of triacylglycerol hydrolysis. Involved in stress granule disassembly: associates with ubiquitinated G3BP1 in response to heat shock, thereby promoting interaction between ubiquitinated G3BP1 and VCP, followed by G3BP1 extraction from stress granules and stress granule disassembly. The protein is FAS-associated factor 2 of Homo sapiens (Human).